The primary structure comprises 80 residues: Teretoxin Tan6.1 (80 aa).

Positions 1–21 are cleaved as a signal peptide; sequence MATSGRLLCLCLVLGLVFESL. A propeptide spanning residues 22–34 is cleaved from the precursor; it reads GHPGARLPKDGKR.

The protein belongs to the teretoxin M (TM) superfamily. In terms of processing, contains 3 disulfide bonds. In terms of tissue distribution, expressed by the venom duct.

It localises to the secreted. The protein is Teretoxin Tan6.1 of Terebra anilis (Auger snail).